Consider the following 588-residue polypeptide: Acid beta-fructofuranosidase 1, vacuolar (588 aa).

Topologically, residues 1–31 (MDTSTSAYAPLPGEDPLFSGHPPASLRRSWK) are cytoplasmic. The propeptide at 1–115 (MDTSTSAYAP…LSYNWTNAMF (115 aa)) is removed in mature form. The chain crosses the membrane as a helical; Signal-anchor for type II membrane protein span at residues 32–52 (GFAVIFASVLFLLSLVGLIIH). The Lumenal segment spans residues 53–588 (QGPQQPPDVM…LRALRKEVGR (536 aa)). The disordered stretch occupies residues 57 to 86 (QPPDVMPDKQDEHHHPQSTTPASETTASWE). A compositionally biased stretch (basic and acidic residues) spans 62–71 (MPDKQDEHHH). Positions 73 to 84 (QSTTPASETTAS) are enriched in polar residues. Substrate is bound by residues 130 to 133 (WMND), Gln149, and Trp157. Asp133 is a catalytic residue. Asn159 carries N-linked (GlcNAc...) asparagine glycosylation. Residue 192-193 (WS) participates in substrate binding. Residue Asn226 is glycosylated (N-linked (GlcNAc...) asparagine). Substrate is bound by residues 256–257 (RD), Glu311, and Asp344. A disulfide bridge links Cys499 with Cys545.

This sequence belongs to the glycosyl hydrolase 32 family. Monomer. May be present in two forms, a 70 kDa monomer and a heterodimer of the 30 kDa and 38 kDa subunits. The ratio of the levels of the two forms within cells appears to be regulated developmentally. Post-translationally, glycosylated. In terms of tissue distribution, expressed in buds, stems, roots and leaves. Expressed in the epidermal cells of young leaves and of primordial leaves.

The protein resides in the membrane. Its subcellular location is the vacuole lumen. The catalysed reaction is Hydrolysis of terminal non-reducing beta-D-fructofuranoside residues in beta-D-fructofuranosides.. Functionally, acidic vacuolar invertase involved in light-induced bud burst. The polypeptide is Acid beta-fructofuranosidase 1, vacuolar (Rosa hybrid cultivar).